A 1647-amino-acid chain; its full sequence is Transcription elongation factor SPT6 homolog (1647 aa).

Positions 1–209 are disordered; the sequence is MARNAISDDE…SKKKKYRQGS (209 aa). Acidic residues predominate over residues 7-20; it reads SDDEEDHELEDDDG. Over residues 21–30 the composition is skewed to basic and acidic residues; that stretch reads EPVHGDPAEH. The span at 31–67 shows a compositional bias: acidic residues; the sequence is DENDDEEDDDDVGNEYENDGFIVNDEDEEEEEEEDEE. Basic residues predominate over residues 103-114; the sequence is KFKKRQYKRLKK. A compositionally biased stretch (basic and acidic residues) spans 132 to 151; the sequence is DSRGGTRRSAEDKIKDRLFD. Acidic residues predominate over residues 152–191; the sequence is DVDVDDPPDDVGDEEDLVVEEDVVGSEDEMADFIVDEDDE. Positions 1103 to 1174 constitute an S1 motif domain; it reads GRIVQASVRR…QRYQVFLICK (72 aa). Residues 1429–1647 are disordered; the sequence is PMRSPADHGS…RKSDGGGGGW (219 aa). A run of 2 repeats spans residues 1443–1444 and 1452–1453. Residues 1443 to 1647 form a 12 X 2 AA repeats of [WG]-[GW] repeats region; the sequence is GWGSSQSEGG…RKSDGGGGGW (205 aa). The span at 1462 to 1471 shows a compositional bias: gly residues; sequence SGRGGEYRNG. The span at 1496–1507 shows a compositional bias: basic and acidic residues; the sequence is RRDDMNSDRQDG. 6 consecutive repeat copies span residues 1511–1512, 1522–1523, 1530–1531, 1547–1548, 1563–1564, and 1574–1575. Gly residues-rich tracts occupy residues 1519 to 1532, 1539 to 1552, 1561 to 1579, and 1588 to 1600; these read ADGG…GGWG, KTGG…GSES, GSWG…GNDS, and GGFG…GGSD. A run of 4 repeats spans residues 1601 to 1602, 1615 to 1616, 1630 to 1631, and 1646 to 1647.

This sequence belongs to the SPT6 family. In terms of assembly, interacts (via N-terminus) with IWS1. In terms of tissue distribution, expressed in shoot apical meristem, leaf primordia, vasculature of young leaves, inflorescence meristem, floral meristem, young floral organs, developing ovules and anthers.

The protein localises to the nucleus. Transcription elongation factor that enhances the transcription elongation by RNA polymerase II (RNAPII). Plays an important role in regulating embryo apical and basal patterning during early embryogenesis, partly through negative regulation of the transcription factors PHABULOSA and PHAVOLUTA. The protein is Transcription elongation factor SPT6 homolog of Arabidopsis thaliana (Mouse-ear cress).